A 239-amino-acid chain; its full sequence is MATPHINAEMGDFADVVLMPGDPLRAKHIAETFLEDVREVNNVRGMLGFTGTYKGRKISVMGHGMGIPSCSIYTKELITDFGVKKIIRVGSCGAVRADVKLRDVVIGMGACTDSKVNRLRFKDHDFAAIADFDMVRNAVDAAKALGVEARVGNIFSADLFYTPDPSMFDVMEKYGILGVEMEAAGIYGVAAEFGAKALTICTVSDHIRTHEQTTAAERQTTFNDMIKIALESVLLGDKE.

Histidine 5 is an a purine D-ribonucleoside binding site. Phosphate is bound by residues glycine 21, arginine 25, arginine 44, and 88-91; that span reads RVGS. A purine D-ribonucleoside-binding positions include 180 to 182 and 204 to 205; these read EME and SD. Aspartate 205 acts as the Proton donor in catalysis.

Belongs to the PNP/UDP phosphorylase family. In terms of assembly, homohexamer; trimer of homodimers.

The catalysed reaction is a purine D-ribonucleoside + phosphate = a purine nucleobase + alpha-D-ribose 1-phosphate. The enzyme catalyses a purine 2'-deoxy-D-ribonucleoside + phosphate = a purine nucleobase + 2-deoxy-alpha-D-ribose 1-phosphate. Its function is as follows. Catalyzes the reversible phosphorolytic breakdown of the N-glycosidic bond in the beta-(deoxy)ribonucleoside molecules, with the formation of the corresponding free purine bases and pentose-1-phosphate. The protein is Purine nucleoside phosphorylase DeoD-type of Cronobacter sakazakii (strain ATCC BAA-894) (Enterobacter sakazakii).